Here is a 265-residue protein sequence, read N- to C-terminus: MAPERLRSTILTKDGINWYYEQEGSGPDVVLIPDGLGDCQMFDKPMSIIGSSGFKVTTFDMPGMSRSSSAPPETYQDVTGQKLANYIVTVMDQLGIKTASVWGCSSGASTVLALCSGFPERVRNGMPHEVPTANPENLQNIHDADPATISRDMAAVSRAMSANEEAWDALGPEVHERLRDNYVRWAYGYPRTIPGSAATKTEDLHKVPIDWTVGAAGPTQVFFENVVIATRESIPIKTLPGFHFPYVSHPEAFAKYVVETTRKYL.

Gly35, Ser105, and Ser106 together coordinate zearalenone. Residue Ser105 is part of the active site. Glu129 is a catalytic residue. Trp185, Tyr189, and His243 together coordinate zearalenone. His243 is a catalytic residue.

Belongs to the AB hydrolase superfamily. Hydrolase RutD family. Homodimer.

It carries out the reaction zearalenone + H2O = hydrolyzed zearalenone + H(+). Functionally, lactonohydrolase that specifically hydrolyzes zearalenone (ZEN), an oestrogenic mycotoxin produced by numerous Fusarium specie, into a non-toxic alkylresorcinol product. This Cladophialophora bantiana (strain ATCC 10958 / CDC1940 / 8579 / CBS 173.52) (Xylohypha bantiana) protein is Zearalenone hydrolase.